Reading from the N-terminus, the 88-residue chain is Pape peptide (88 aa).

The first 22 residues, M1–S22, serve as a signal peptide directing secretion. Residues F23 to G45 constitute a propeptide that is removed on maturation. The disordered stretch occupies residues L49 to R88. Residues E56–E68 are compositionally biased toward pro residues. 3 PAPE repeats span residues P57–E60, P61–E64, and P65–E68. A compositionally biased stretch (low complexity) spans A69–A81.

As to expression, expressed by the venom gland.

It localises to the secreted. The polypeptide is Pape peptide (Tityus serrulatus (Brazilian scorpion)).